A 368-amino-acid polypeptide reads, in one-letter code: Left-right determination factor 1 (368 aa).

Residues 1–21 (MPFLWLCWALWALSLVSLREA) form the signal peptide. A propeptide spans 22-76 (LTGEQILGSLLQQLQLDQPPVLDKADVEGMVIPSHVRTQYVALLQHSHASRSRGK) (or 135). N-linked (GlcNAc...) asparagine glycosylation is present at N158. Intrachain disulfides connect C253–C266, C265–C318, C295–C353, and C299–C355.

It belongs to the TGF-beta family. The processing of the protein may also occur at the second R-X-X-R site located at AA 132-135. Processing appears to be regulated in a cell-type specific manner.

Its subcellular location is the secreted. In terms of biological role, required for left-right axis determination as a regulator of LEFTY2 and NODAL. This is Left-right determination factor 1 (Lefty1) from Mus musculus (Mouse).